Reading from the N-terminus, the 152-residue chain is Transcriptional regulator MraZ (152 aa).

SpoVT-AbrB domains lie at 5–52 and 81–124; these read ASAI…PLHE and AHEV…DEQA.

It belongs to the MraZ family. In terms of assembly, forms oligomers.

The protein localises to the cytoplasm. The protein resides in the nucleoid. The polypeptide is Transcriptional regulator MraZ (Shewanella sp. (strain MR-7)).